The chain runs to 345 residues: Small ribosomal subunit protein mS45 (345 aa).

The transit peptide at 1–27 (MSYGLTGTSSKLRGTSSIFSWTQVRHF) directs the protein to the mitochondrion.

The protein belongs to the mitochondrion-specific ribosomal protein mS45 family. As to quaternary structure, component of the mitochondrial small ribosomal subunit (mt-SSU). Mature yeast 74S mitochondrial ribosomes consist of a small (37S) and a large (54S) subunit. The 37S small subunit contains a 15S ribosomal RNA (15S mt-rRNA) and 34 different proteins. The 54S large subunit contains a 21S rRNA (21S mt-rRNA) and 46 different proteins.

The protein resides in the mitochondrion. Component of the mitochondrial ribosome (mitoribosome), a dedicated translation machinery responsible for the synthesis of mitochondrial genome-encoded proteins, including at least some of the essential transmembrane subunits of the mitochondrial respiratory chain. The mitoribosomes are attached to the mitochondrial inner membrane and translation products are cotranslationally integrated into the membrane. In Saccharomyces cerevisiae (strain ATCC 204508 / S288c) (Baker's yeast), this protein is Small ribosomal subunit protein mS45 (MRPS35).